Reading from the N-terminus, the 813-residue chain is Putative ATPase, plasma membrane-like (813 aa).

Topologically, residues 1–66 (MATGDSLEDI…KKKEHITLRF (66 aa)) are cytoplasmic. The chain crosses the membrane as a helical span at residues 67–86 (FALMFKPLSWVIQAAAIMAM). The Extracellular segment spans residues 87 to 94 (LFANGDGR). A helical membrane pass occupies residues 95-115 (QLFLGIVCLLIVNTIICYLKE). The Cytoplasmic portion of the chain corresponds to 116 to 245 (DDAANVVAMA…GHFRKVVTEI (130 aa)). Residues 246–266 (ENLCVISIAIGISIEVIVMYW) traverse the membrane as a helical segment. Residues 267–275 (IQRRNFSDV) lie on the Extracellular side of the membrane. A helical membrane pass occupies residues 276–293 (INNLLVLVIGGIPLAMPT). Over 294–555 (VLYVIMVTGS…ASRAILQQMK (262 aa)) the chain is Cytoplasmic. Asp-331 functions as the 4-aspartylphosphate intermediate in the catalytic mechanism. Asp-500 and Asp-504 together coordinate Mg(2+). The helical transmembrane segment at 556–577 (HYTIYAVSITIRVVFGFMFIAL) threads the bilayer. Over 578–582 (IWKFD) the chain is Extracellular. A helical transmembrane segment spans residues 583 to 605 (FSPFMVLAIALLNEETTKAITMD). At 606-622 (NVTNPSPTPDSLKLKEI) the chain is on the cytoplasmic side. The helical transmembrane segment at 623 to 643 (FATGVVYGSYMALITVVFFWA) threads the bilayer. At 644–664 (AYRTDIFPRTFHVRDLRGNEA) the chain is on the extracellular side. Residues 665 to 685 (EMMCALYLQVSIMSQALFFVI) form a helical membrane-spanning segment. Over 686–697 (QSRSWFFVERPG) the chain is Cytoplasmic. A helical transmembrane segment spans residues 698 to 718 (ELLFLSFVTVQTIATTLAVYA). The Extracellular segment spans residues 719–726 (SWETARIE). The chain crosses the membrane as a helical span at residues 727–747 (GIGWSWAGVIWLYNIIFFFPL). Over 748 to 813 (DIMKFGIRYI…SQDLRGVGWV (66 aa)) the chain is Cytoplasmic. Phosphoserine is present on Ser-776.

This sequence belongs to the cation transport ATPase (P-type) (TC 3.A.3) family. Type IIIA subfamily.

The protein localises to the membrane. The protein is Putative ATPase, plasma membrane-like of Arabidopsis thaliana (Mouse-ear cress).